Consider the following 510-residue polypeptide: Glycogen synthase (510 aa).

Residue lysine 18 coordinates ADP-alpha-D-glucose.

It belongs to the glycosyltransferase 1 family. Bacterial/plant glycogen synthase subfamily.

It carries out the reaction [(1-&gt;4)-alpha-D-glucosyl](n) + ADP-alpha-D-glucose = [(1-&gt;4)-alpha-D-glucosyl](n+1) + ADP + H(+). Its pathway is glycan biosynthesis; glycogen biosynthesis. Its function is as follows. Synthesizes alpha-1,4-glucan chains using ADP-glucose. The sequence is that of Glycogen synthase from Bordetella bronchiseptica (strain ATCC BAA-588 / NCTC 13252 / RB50) (Alcaligenes bronchisepticus).